Reading from the N-terminus, the 178-residue chain is Matrix-remodeling-associated protein 7 (178 aa).

Residues 7-27 traverse the membrane as a helical segment; it reads LLAALPALVTALALLLAWLLL. Positions 33-121 are disordered; it reads RVPAPESTAS…AFSFKYSPGQ (89 aa). Residues 48 to 65 are compositionally biased toward pro residues; it reads APAPPEPPESCAPEPAPE. The span at 76–85 shows a compositional bias: acidic residues; it reads PEESEAEEPA. Phosphoserine is present on residues Ser-79 and Ser-165.

Its subcellular location is the membrane. The sequence is that of Matrix-remodeling-associated protein 7 (Mxra7) from Mus musculus (Mouse).